A 490-amino-acid polypeptide reads, in one-letter code: MTGDADEGRDVVRRDRFSGGPARGFLSSLAADERIFEADLAVDRAHVVMLDEQDIIGTDDAAAILGALDDVEAAGHGSLTDGEDVHAAIETAVIERVGDRGGKMHTARSRNDEVAACIRYRLREDVLAAVEATLEAREMLLDVAGDHTETVMPGFTHLQPAQPTTVAHYLHSYASALARDTERLLDAYGRINRSPLGAAAFAGTPFDIDRERTAELLGFDGVVRNSMDAASARDFLVETTAAAAGLATTLSGLAEDLVVFSKAGYVELDDAYASTSSIMPQKKNPDTMELVRATAGDTAAGLNALLTILKGLPRAYNRDLQRAHPHAFEALDAVTEATEVAAGAVATADWKEPALSEAAGEGFSTATGVADLLAMEGVPFRTAHELVARAAEAGGDYAALSAAAEDILGGPLSEHVDKAAVEAALDPESSVASRDSLGGPAPESMAAALSAAGQRLDADAEALRERRGALATAADERERVVSSYDSTAPE.

2 disordered regions span residues aspartate 426–alanine 452 and alanine 469–glutamate 490. Residues proline 440–alanine 452 are compositionally biased toward low complexity. Positions alanine 469–valine 480 are enriched in basic and acidic residues.

This sequence belongs to the lyase 1 family. Argininosuccinate lyase subfamily.

The protein localises to the cytoplasm. It catalyses the reaction 2-(N(omega)-L-arginino)succinate = fumarate + L-arginine. It participates in amino-acid biosynthesis; L-arginine biosynthesis; L-arginine from L-ornithine and carbamoyl phosphate: step 3/3. This is Argininosuccinate lyase from Natronomonas pharaonis (strain ATCC 35678 / DSM 2160 / CIP 103997 / JCM 8858 / NBRC 14720 / NCIMB 2260 / Gabara) (Halobacterium pharaonis).